Here is a 339-residue protein sequence, read N- to C-terminus: Heat-inducible transcription repressor HrcA (339 aa).

It belongs to the HrcA family.

Its function is as follows. Negative regulator of class I heat shock genes (grpE-dnaK-dnaJ and groELS operons). Prevents heat-shock induction of these operons. The chain is Heat-inducible transcription repressor HrcA from Paraburkholderia phytofirmans (strain DSM 17436 / LMG 22146 / PsJN) (Burkholderia phytofirmans).